The primary structure comprises 162 residues: Protein-export protein SecB (162 aa).

It belongs to the SecB family. In terms of assembly, homotetramer, a dimer of dimers. One homotetramer interacts with 1 SecA dimer.

The protein resides in the cytoplasm. Functionally, one of the proteins required for the normal export of preproteins out of the cell cytoplasm. It is a molecular chaperone that binds to a subset of precursor proteins, maintaining them in a translocation-competent state. It also specifically binds to its receptor SecA. In Bradyrhizobium sp. (strain BTAi1 / ATCC BAA-1182), this protein is Protein-export protein SecB.